The primary structure comprises 117 residues: Large ribosomal subunit protein bL20 (117 aa).

Belongs to the bacterial ribosomal protein bL20 family.

Binds directly to 23S ribosomal RNA and is necessary for the in vitro assembly process of the 50S ribosomal subunit. It is not involved in the protein synthesizing functions of that subunit. The polypeptide is Large ribosomal subunit protein bL20 (Crocosphaera subtropica (strain ATCC 51142 / BH68) (Cyanothece sp. (strain ATCC 51142))).